The following is a 463-amino-acid chain: L-seryl-tRNA(Sec) selenium transferase (463 aa).

K295 bears the N6-(pyridoxal phosphate)lysine mark.

This sequence belongs to the SelA family. In terms of assembly, homodecamer; pentamer of dimers. Binds only one seryl-tRNA(Sec) per dimer. Requires pyridoxal 5'-phosphate as cofactor.

The protein resides in the cytoplasm. The enzyme catalyses L-seryl-tRNA(Sec) + selenophosphate + H(+) = L-selenocysteinyl-tRNA(Sec) + phosphate. It functions in the pathway aminoacyl-tRNA biosynthesis; selenocysteinyl-tRNA(Sec) biosynthesis; selenocysteinyl-tRNA(Sec) from L-seryl-tRNA(Sec) (bacterial route): step 1/1. Functionally, converts seryl-tRNA(Sec) to selenocysteinyl-tRNA(Sec) required for selenoprotein biosynthesis. This Escherichia coli O45:K1 (strain S88 / ExPEC) protein is L-seryl-tRNA(Sec) selenium transferase.